The following is a 630-amino-acid chain: WD repeat-containing protein 76 (630 aa).

Positions 105–118 are enriched in polar residues; that stretch reads TASSKAESTLQKSS. Disordered regions lie at residues 105–165, 199–219, and 231–252; these read TASS…FSGL, IEKR…ENET, and DPSG…DENP. The segment covering 145 to 155 has biased composition (acidic residues); that stretch reads SSQDGDSDEDT. 7 WD repeats span residues 318-359, 365-405, 408-448, 453-492, 500-540, 542-572, and 598-630; these read VTKG…KEDG, PHSQ…FEEV, NERS…ASYE, SSLR…PSGS, EHTK…SQIP, LTTI…CVII, and ECLV…VFMN.

The protein belongs to the WD repeat DDB2/WDR76 family. Interacts with CUL4A and/or CUL4B.

Its function is as follows. Specifically binds 5-hydroxymethylcytosine (5hmC), suggesting that it acts as a specific reader of 5hmC. The protein is WD repeat-containing protein 76 (WDR76) of Rhinolophus ferrumequinum (Greater horseshoe bat).